Reading from the N-terminus, the 447-residue chain is UPF0210 protein Lreu_0940 (447 aa).

It belongs to the UPF0210 family. As to quaternary structure, homodimer.

This chain is UPF0210 protein Lreu_0940, found in Limosilactobacillus reuteri (strain DSM 20016) (Lactobacillus reuteri).